The chain runs to 437 residues: Amino-acid acetyltransferase (437 aa).

Positions 289–429 constitute an N-acetyltransferase domain; that stretch reads ENIRLATSFD…EHYNYQRMSK (141 aa).

This sequence belongs to the acetyltransferase family. ArgA subfamily.

The protein resides in the cytoplasm. The catalysed reaction is L-glutamate + acetyl-CoA = N-acetyl-L-glutamate + CoA + H(+). Its pathway is amino-acid biosynthesis; L-arginine biosynthesis; N(2)-acetyl-L-ornithine from L-glutamate: step 1/4. This Actinobacillus pleuropneumoniae serotype 7 (strain AP76) protein is Amino-acid acetyltransferase.